Here is a 278-residue protein sequence, read N- to C-terminus: HTH-type transcriptional activator RhaS (278 aa).

Positions 174 to 272 constitute an HTH araC/xylS-type domain; sequence NQLMAWLEDH…SWSPREIRQG (99 aa). 2 DNA-binding regions (H-T-H motif) span residues 191-212 and 239-262; these read ETVA…KQHT and VTDI…RREF.

Binds DNA as a dimer.

Its subcellular location is the cytoplasm. Activates expression of the rhaBAD and rhaT operons. The sequence is that of HTH-type transcriptional activator RhaS from Enterobacter sp. (strain 638).